Consider the following 264-residue polypeptide: Expansin-B3 (264 aa).

Positions 1 to 25 are cleaved as a signal peptide; sequence MQLFPVMLATLCIVLQLLIGSSALA. Positions 54–162 constitute an Expansin-like EG45 domain; the sequence is GGACGYGTLV…RRTACKYRGK (109 aa). Cystine bridges form between Cys57-Cys86, Cys89-Cys157, and Cys94-Cys100. An Expansin-like CBD domain is found at 175-256; sequence FWLSLLVEFE…NWAPKATYSS (82 aa).

The protein belongs to the expansin family. Expansin B subfamily.

The protein localises to the secreted. It localises to the cell wall. The protein resides in the membrane. Its function is as follows. May cause loosening and extension of plant cell walls by disrupting non-covalent bonding between cellulose microfibrils and matrix glucans. No enzymatic activity has been found. This is Expansin-B3 (EXPB3) from Arabidopsis thaliana (Mouse-ear cress).